Here is a 116-residue protein sequence, read N- to C-terminus: Large ribosomal subunit protein bL20 (116 aa).

Belongs to the bacterial ribosomal protein bL20 family.

Binds directly to 23S ribosomal RNA and is necessary for the in vitro assembly process of the 50S ribosomal subunit. It is not involved in the protein synthesizing functions of that subunit. This chain is Large ribosomal subunit protein bL20, found in Helicobacter pylori (strain Shi470).